Consider the following 777-residue polypeptide: DNA ligase (777 aa).

NAD(+)-binding positions include 35 to 39 (DAEYD), 84 to 85 (SL), and glutamate 116. Lysine 118 acts as the N6-AMP-lysine intermediate in catalysis. NAD(+) is bound by residues arginine 139, glutamate 176, lysine 293, and lysine 317. Zn(2+)-binding residues include cysteine 411, cysteine 414, cysteine 429, and cysteine 435. The BRCT domain maps to 691–777 (MESQPLEGQT…NQHGIDPGAL (87 aa)).

It belongs to the NAD-dependent DNA ligase family. LigA subfamily. Mg(2+) serves as cofactor. It depends on Mn(2+) as a cofactor.

It carries out the reaction NAD(+) + (deoxyribonucleotide)n-3'-hydroxyl + 5'-phospho-(deoxyribonucleotide)m = (deoxyribonucleotide)n+m + AMP + beta-nicotinamide D-nucleotide.. DNA ligase that catalyzes the formation of phosphodiester linkages between 5'-phosphoryl and 3'-hydroxyl groups in double-stranded DNA using NAD as a coenzyme and as the energy source for the reaction. It is essential for DNA replication and repair of damaged DNA. The sequence is that of DNA ligase from Alcanivorax borkumensis (strain ATCC 700651 / DSM 11573 / NCIMB 13689 / SK2).